A 429-amino-acid chain; its full sequence is Cyclin-B2-3 (429 aa).

Residues 86-101 (ADHKPHIRDEETKKPD) are compositionally biased toward basic and acidic residues. The segment at 86-109 (ADHKPHIRDEETKKPDSVSSEEPE) is disordered.

The protein belongs to the cyclin family. Cyclin AB subfamily.

This chain is Cyclin-B2-3 (CYCB2-3), found in Arabidopsis thaliana (Mouse-ear cress).